Consider the following 553-residue polypeptide: Hydroxylamine reductase (553 aa).

Cys3, Cys6, Cys18, and Cys25 together coordinate [2Fe-2S] cluster. His252, Glu276, Cys320, Cys408, Cys436, Cys461, Glu495, and Lys497 together coordinate hybrid [4Fe-2O-2S] cluster. Cys408 carries the cysteine persulfide modification.

This sequence belongs to the HCP family. Requires [2Fe-2S] cluster as cofactor. The cofactor is hybrid [4Fe-2O-2S] cluster.

It is found in the cytoplasm. It carries out the reaction A + NH4(+) + H2O = hydroxylamine + AH2 + H(+). Catalyzes the reduction of hydroxylamine to form NH(3) and H(2)O. The protein is Hydroxylamine reductase of Tolumonas auensis (strain DSM 9187 / NBRC 110442 / TA 4).